We begin with the raw amino-acid sequence, 121 residues long: Snaclec coagulation factor IX-binding protein subunit A (121 aa).

The C-type lectin domain occupies 1 to 120 (YEGHCYQTFK…CGERNPFVCE (120 aa)). Cystine bridges form between Cys22–Cys119 and Cys94–Cys111. 3 residues coordinate Ca(2+): Ser33, Glu35, and Glu39. Glu120 is a Ca(2+) binding site.

Belongs to the snaclec family. In terms of assembly, heterodimer of subunits A and B; disulfide-linked. As to expression, expressed by the venom gland.

Its subcellular location is the secreted. Functionally, anticoagulant protein which binds to the gamma-carboxyglutamic acid-domain regions of factor IX (F9) (but not factor X) in the presence of calcium with a 1 to 1 stoichiometry. This chain is Snaclec coagulation factor IX-binding protein subunit A, found in Gloydius halys (Chinese water mocassin).